A 187-amino-acid polypeptide reads, in one-letter code: Ion-translocating oxidoreductase complex subunit B (187 aa).

Positions 1-26 (MTHILFAVLVLALLALAFGIILGFAA) are hydrophobic. Residues 32–90 (EADPIVDQLDALLPQTQCGQCGYPGCKPYAEALANGDQINKCVPGGDATMRKIADLMGV) enclose the 4Fe-4S domain. 12 residues coordinate [4Fe-4S] cluster: cysteine 49, cysteine 52, cysteine 57, cysteine 73, cysteine 115, cysteine 118, cysteine 121, cysteine 125, cysteine 145, cysteine 148, cysteine 151, and cysteine 155. 4Fe-4S ferredoxin-type domains follow at residues 106–135 (KVAF…GATK) and 136–165 (AMHT…MIPV).

This sequence belongs to the 4Fe4S bacterial-type ferredoxin family. RnfB subfamily. As to quaternary structure, the complex is composed of six subunits: RnfA, RnfB, RnfC, RnfD, RnfE and RnfG. [4Fe-4S] cluster is required as a cofactor.

The protein resides in the cell inner membrane. Its function is as follows. Part of a membrane-bound complex that couples electron transfer with translocation of ions across the membrane. The polypeptide is Ion-translocating oxidoreductase complex subunit B (Aeromonas hydrophila subsp. hydrophila (strain ATCC 7966 / DSM 30187 / BCRC 13018 / CCUG 14551 / JCM 1027 / KCTC 2358 / NCIMB 9240 / NCTC 8049)).